The primary structure comprises 632 residues: tRNA uridine 5-carboxymethylaminomethyl modification enzyme MnmG (632 aa).

FAD is bound by residues 15 to 20, isoleucine 127, and serine 182; that span reads GAGHAG. 276–290 is a binding site for NAD(+); it reads GPRYCPSIEDKIVRF. Glutamine 373 provides a ligand contact to FAD.

It belongs to the MnmG family. In terms of assembly, homodimer. Heterotetramer of two MnmE and two MnmG subunits. FAD serves as cofactor.

The protein localises to the cytoplasm. In terms of biological role, NAD-binding protein involved in the addition of a carboxymethylaminomethyl (cmnm) group at the wobble position (U34) of certain tRNAs, forming tRNA-cmnm(5)s(2)U34. The polypeptide is tRNA uridine 5-carboxymethylaminomethyl modification enzyme MnmG (Streptococcus pyogenes serotype M4 (strain MGAS10750)).